We begin with the raw amino-acid sequence, 271 residues long: Ubiquitin thioesterase OTUB1 (271 aa).

An N-acetylalanine modification is found at Ala2. The residue at position 16 (Ser16) is a Phosphoserine. Position 26 is a phosphotyrosine; by SRC (Tyr26). The 192-residue stretch at 80-271 (SYIRKTRPDG…RPGHYDILYK (192 aa)) folds into the OTU domain. The active site involves Asp88. Cys91 functions as the Nucleophile in the catalytic mechanism. Ubiquitin-conjugating enzyme E2 binding regions lie at residues 130–138 (FTEFTIEDF) and 169–177 (DYLVVYLRL). Residues 189–195 (FFEHFIE) are free ubiquitin binding. The interval 206 to 213 (QEVEPMCK) is ubiquitin-conjugating enzyme E2 binding. Free ubiquitin binding regions lie at residues 214–221 (ESDHIHII) and 245–251 (NPHIFPE). His265 is an active-site residue.

The protein belongs to the peptidase C65 family. Interacts with FUS and RACK1. Interacts with UBE2D1/UBCH5A, UBE2W/UBC16 and UBE2N/UBC13. As to quaternary structure, interacts with RNF128. Forms a ternary complex with RNF128 and USP8. Interacts with the C-terminal UCH catalytic domain of USP8. In terms of assembly, interacts with RNF128. Does not associate with USP8. Post-translationally, phosphorylation at Tyr-26 by SRC and SRMS promotes deubiquitination of RPTOR via a non-catalytic process. As to expression, isoform 1 is ubiquitous. Isoform 2 is expressed only in lymphoid tissues such as tonsils, lymph nodes and spleen, as well as peripheral blood mononuclear cells.

The protein resides in the cytoplasm. It carries out the reaction Thiol-dependent hydrolysis of ester, thioester, amide, peptide and isopeptide bonds formed by the C-terminal Gly of ubiquitin (a 76-residue protein attached to proteins as an intracellular targeting signal).. With respect to regulation, by free ubiquitin: binding of free ubiquitin triggers conformational changes in the OTU domain and formation of a ubiquitin-binding helix in the N-terminus, promoting binding of the conjugated donor ubiquitin in UBE2N/UBC13 to OTUB1. Hydrolase that can specifically remove 'Lys-48'-linked conjugated ubiquitin from proteins and plays an important regulatory role at the level of protein turnover by preventing degradation. Regulator of T-cell anergy, a phenomenon that occurs when T-cells are rendered unresponsive to antigen rechallenge and no longer respond to their cognate antigen. Acts via its interaction with RNF128/GRAIL, a crucial inductor of CD4 T-cell anergy. Isoform 1 destabilizes RNF128, leading to prevent anergy. In contrast, isoform 2 stabilizes RNF128 and promotes anergy. Surprisingly, it regulates RNF128-mediated ubiquitination, but does not deubiquitinate polyubiquitinated RNF128. Deubiquitinates estrogen receptor alpha (ESR1). Mediates deubiquitination of 'Lys-48'-linked polyubiquitin chains, but not 'Lys-63'-linked polyubiquitin chains. Not able to cleave di-ubiquitin. Also capable of removing NEDD8 from NEDD8 conjugates, but with a much lower preference compared to 'Lys-48'-linked ubiquitin. In terms of biological role, plays a key non-catalytic role in DNA repair regulation by inhibiting activity of RNF168, an E3 ubiquitin-protein ligase that promotes accumulation of 'Lys-63'-linked histone H2A and H2AX at DNA damage sites. Inhibits RNF168 independently of ubiquitin thioesterase activity by binding and inhibiting UBE2N/UBC13, the E2 partner of RNF168, thereby limiting spreading of 'Lys-63'-linked histone H2A and H2AX marks. Inhibition occurs by binding to free ubiquitin: free ubiquitin acts as an allosteric regulator that increases affinity for UBE2N/UBC13 and disrupts interaction with UBE2V1. The OTUB1-UBE2N/UBC13-free ubiquitin complex adopts a configuration that mimics a cleaved 'Lys48'-linked di-ubiquitin chain. Acts as a regulator of mTORC1 and mTORC2 complexes. When phosphorylated at Tyr-26, acts as an activator of the mTORC1 complex by mediating deubiquitination of RPTOR via a non-catalytic process: acts by binding and inhibiting the activity of the ubiquitin-conjugating enzyme E2 (UBE2D1/UBCH5A, UBE2W/UBC16 and UBE2N/UBC13), thereby preventing ubiquitination of RPTOR. Can also act as an inhibitor of the mTORC1 and mTORC2 complexes in response to amino acids by mediating non-catalytic deubiquitination of DEPTOR. This is Ubiquitin thioesterase OTUB1 (OTUB1) from Homo sapiens (Human).